Consider the following 344-residue polypeptide: Aspartate-semialdehyde dehydrogenase (344 aa).

NADP(+) contacts are provided by residues 10–13 (TGQV) and 38–39 (RS). Arg101 is a binding site for phosphate. Cys131 (acyl-thioester intermediate) is an active-site residue. Residue Gln158 participates in substrate binding. 161 to 162 (SG) provides a ligand contact to NADP(+). A phosphate-binding site is contributed by Lys228. Residue Arg250 coordinates substrate. His257 functions as the Proton acceptor in the catalytic mechanism. NADP(+) is bound at residue Asn326.

It belongs to the aspartate-semialdehyde dehydrogenase family. Homodimer.

The catalysed reaction is L-aspartate 4-semialdehyde + phosphate + NADP(+) = 4-phospho-L-aspartate + NADPH + H(+). The protein operates within amino-acid biosynthesis; L-lysine biosynthesis via DAP pathway; (S)-tetrahydrodipicolinate from L-aspartate: step 2/4. It functions in the pathway amino-acid biosynthesis; L-methionine biosynthesis via de novo pathway; L-homoserine from L-aspartate: step 2/3. It participates in amino-acid biosynthesis; L-threonine biosynthesis; L-threonine from L-aspartate: step 2/5. Its function is as follows. Catalyzes the NADPH-dependent formation of L-aspartate-semialdehyde (L-ASA) by the reductive dephosphorylation of L-aspartyl-4-phosphate. This Corynebacterium glutamicum (strain ATCC 13032 / DSM 20300 / JCM 1318 / BCRC 11384 / CCUG 27702 / LMG 3730 / NBRC 12168 / NCIMB 10025 / NRRL B-2784 / 534) protein is Aspartate-semialdehyde dehydrogenase.